The chain runs to 128 residues: NHP2-like protein 1 (128 aa).

Residues R36–R48 are interaction with U4 snRNA and U4atac snRNA. The important for U4 snRNA-binding stretch occupies residues S96–V128.

It belongs to the eukaryotic ribosomal protein eL8 family. As to quaternary structure, identified in the spliceosome B complex. Component of the U4/U6-U5 tri-snRNP complex. Part of the small subunit (SSU) processome, composed of more than 70 proteins and the RNA chaperone small nucleolar RNA (snoRNA) U3.

It localises to the nucleus. The protein localises to the nucleolus. Functionally, part of the small subunit (SSU) processome, first precursor of the small eukaryotic ribosomal subunit. During the assembly of the SSU processome in the nucleolus, many ribosome biogenesis factors, an RNA chaperone and ribosomal proteins associate with the nascent pre-rRNA and work in concert to generate RNA folding, modifications, rearrangements and cleavage as well as targeted degradation of pre-ribosomal RNA by the RNA exosome. Involved in pre-mRNA splicing as component of the spliceosome. Binds to the 5'-stem-loop of U4 snRNA and thereby contributes to spliceosome assembly. The protein undergoes a conformational change upon RNA-binding. Core component of box C/D small nucleolar ribonucleoprotein (snoRNP) complexes that function in methylation of multiple sites on ribosomal RNAs (rRNAs) and messenger RNAs (mRNAs). This is NHP2-like protein 1 from Xenopus tropicalis (Western clawed frog).